Consider the following 372-residue polypeptide: GTPase Obg (372 aa).

The Obg domain occupies 1 to 159 (MAFVDEAKFF…KWLLIELKLM (159 aa)). A disordered region spans residues 121–141 (GSGGMGNPHFSSGSNRTPRVA). The OBG-type G domain occupies 160 to 329 (ADVGLVGLPN…LVKLIGDIID (170 aa)). Residues 166 to 173 (GLPNAGKS), 191 to 195 (FTTLE), 213 to 216 (DIPG), 280 to 283 (NKCD), and 310 to 312 (SAI) each bind GTP. S173 and T193 together coordinate Mg(2+). The segment at 346 to 372 (QDLKKQKEEERRQELKKQKEEEQAKDE) is disordered.

It belongs to the TRAFAC class OBG-HflX-like GTPase superfamily. OBG GTPase family. As to quaternary structure, monomer. Requires Mg(2+) as cofactor.

It localises to the cytoplasm. In terms of biological role, an essential GTPase which binds GTP, GDP and possibly (p)ppGpp with moderate affinity, with high nucleotide exchange rates and a fairly low GTP hydrolysis rate. Plays a role in control of the cell cycle, stress response, ribosome biogenesis and in those bacteria that undergo differentiation, in morphogenesis control. This is GTPase Obg from Desulfotalea psychrophila (strain LSv54 / DSM 12343).